The following is a 37-amino-acid chain: Large ribosomal subunit protein bL36 (37 aa).

This sequence belongs to the bacterial ribosomal protein bL36 family.

The polypeptide is Large ribosomal subunit protein bL36 (Magnetococcus marinus (strain ATCC BAA-1437 / JCM 17883 / MC-1)).